Reading from the N-terminus, the 392-residue chain is MKHGNYSLATMNVCSNTTKDPLTLMAMWGSMKGYNPEQGFSFEGPEKRLEVILRCTLETHVDGLRSLDDSVWSGVVGSLNAQIVSRESNEYINSYVLTESSLFVMKNRIILITCGTTTLLNSIPNILEAISAVRGELEWVSFMHKNYSFPWMQKGPHTSLADEFATLKQHFPTGKPYIFGPVDSDHYFLFCYDDIIRPCSSEDDTQLSMTMYGLDKEQTKHWFSDRFISTSAETAAIRAATHLDRVVDGTWTLHDLQFEPCGYSINAIRDEEYQTMHITPEDHCSFASYETNSRAANYSDRMKKVLGVFRPQRFTVIVFLDPESPVGKAYNEGKGIGVEPEYYPEYNLLHRTTNEFAPGYVAMKINYVRTAAVEETVTAVGGAEAGAEGGPD.

Active-site residues include Glu43 and Glu46. The active-site Schiff-base intermediate with substrate; via pyruvic acid is Ser100. Ser100 carries the pyruvic acid (Ser); by autocatalysis modification. Cys114 acts as the Proton donor; for catalytic activity in catalysis. Active-site proton acceptor; for processing activity residues include Ser264 and His277.

This sequence belongs to the eukaryotic AdoMetDC family. Pyruvate is required as a cofactor. In terms of processing, is synthesized initially as an inactive proenzyme. Formation of the active enzyme involves a self-maturation process in which the active site pyruvoyl group is generated from an internal serine residue via an autocatalytic post-translational modification. Two non-identical subunits are generated from the proenzyme in this reaction, and the pyruvate is formed at the N-terminus of the alpha chain, which is derived from the carboxyl end of the proenzyme. The post-translation cleavage follows an unusual pathway, termed non-hydrolytic serinolysis, in which the side chain hydroxyl group of the serine supplies its oxygen atom to form the C-terminus of the beta chain, while the remainder of the serine residue undergoes an oxidative deamination to produce ammonia and the pyruvoyl group blocking the N-terminus of the alpha chain.

The catalysed reaction is S-adenosyl-L-methionine + H(+) = S-adenosyl 3-(methylsulfanyl)propylamine + CO2. Its pathway is amine and polyamine biosynthesis; S-adenosylmethioninamine biosynthesis; S-adenosylmethioninamine from S-adenosyl-L-methionine: step 1/1. This is S-adenosylmethionine decarboxylase proenzyme from Leishmania infantum.